The following is a 247-amino-acid chain: V-type proton ATPase subunit D (247 aa).

It belongs to the V-ATPase D subunit family. In terms of assembly, V-ATPase is a heteromultimeric enzyme made up of two complexes: the ATP-hydrolytic V1 complex and the proton translocation V0 complex. The V1 complex consists of three catalytic AB heterodimers that form a heterohexamer, three peripheral stalks each consisting of EG heterodimers, one central rotor including subunits D and F, and the regulatory subunits C and H. The proton translocation complex V0 consists of the proton transport subunit a, a ring of proteolipid subunits c9c'', rotary subunit d, subunits e and f, and the accessory subunits ATP6AP1/Ac45 and ATP6AP2/PRR. Interacts with SNX10.

Its subcellular location is the membrane. It localises to the cytoplasmic vesicle. The protein localises to the clathrin-coated vesicle membrane. It is found in the cytoplasm. The protein resides in the cytoskeleton. Its subcellular location is the microtubule organizing center. It localises to the centrosome. The protein localises to the cell projection. It is found in the cilium. Subunit of the V1 complex of vacuolar(H+)-ATPase (V-ATPase), a multisubunit enzyme composed of a peripheral complex (V1) that hydrolyzes ATP and a membrane integral complex (V0) that translocates protons. V-ATPase is responsible for acidifying and maintaining the pH of intracellular compartments and in some cell types, is targeted to the plasma membrane, where it is responsible for acidifying the extracellular environment. May play a role in cilium biogenesis through regulation of the transport and the localization of proteins to the cilium. This is V-type proton ATPase subunit D (ATP6V1D) from Oryctolagus cuniculus (Rabbit).